A 292-amino-acid polypeptide reads, in one-letter code: 33 kDa chaperonin (292 aa).

Cystine bridges form between cysteine 230–cysteine 232 and cysteine 263–cysteine 266.

Belongs to the HSP33 family. In terms of processing, under oxidizing conditions two disulfide bonds are formed involving the reactive cysteines. Under reducing conditions zinc is bound to the reactive cysteines and the protein is inactive.

It is found in the cytoplasm. In terms of biological role, redox regulated molecular chaperone. Protects both thermally unfolding and oxidatively damaged proteins from irreversible aggregation. Plays an important role in the bacterial defense system toward oxidative stress. In Escherichia coli O17:K52:H18 (strain UMN026 / ExPEC), this protein is 33 kDa chaperonin.